Consider the following 461-residue polypeptide: tRNA modification GTPase MnmE (461 aa).

(6S)-5-formyl-5,6,7,8-tetrahydrofolate-binding residues include R23, E88, and R127. One can recognise a TrmE-type G domain in the interval 223–383 (GLNTVIVGKP…LKECIKNLFF (161 aa)). Residue N233 participates in K(+) binding. GTP-binding positions include 233–238 (NVGKSS), 252–258 (TEIPGTT), and 277–280 (DTAG). S237 serves as a coordination point for Mg(2+). K(+) is bound by residues T252, I254, and T257. T258 provides a ligand contact to Mg(2+). Residue K461 participates in (6S)-5-formyl-5,6,7,8-tetrahydrofolate binding.

This sequence belongs to the TRAFAC class TrmE-Era-EngA-EngB-Septin-like GTPase superfamily. TrmE GTPase family. As to quaternary structure, homodimer. Heterotetramer of two MnmE and two MnmG subunits. K(+) serves as cofactor.

Its subcellular location is the cytoplasm. Exhibits a very high intrinsic GTPase hydrolysis rate. Involved in the addition of a carboxymethylaminomethyl (cmnm) group at the wobble position (U34) of certain tRNAs, forming tRNA-cmnm(5)s(2)U34. The sequence is that of tRNA modification GTPase MnmE from Clostridium botulinum (strain Okra / Type B1).